Consider the following 364-residue polypeptide: Phosrestin-2 (364 aa).

Belongs to the arrestin family. In terms of processing, phosphorylated, but does not undergo light-induced phosphorylation. Expressed specifically and abundantly in photoreceptor cells in retina and ocelli.

The protein resides in the cell projection. It localises to the rhabdomere. Regulates photoreceptor cell deactivation. Arr1 and Arr2 proteins are mediators of rhodopsin inactivation and are essential for the termination of the phototransduction cascade. Involved in regulating normal cycles of per nuclear accumulation in brain circadian neurons and thus is important for normal circadian behavior. In the dark, functions with Arr2 to promote the formation of cytosolic Bdbt foci, which are required for dco localization to photoreceptor nuclei where it phosphorylates and activates degradation of per. This Drosophila melanogaster (Fruit fly) protein is Phosrestin-2 (Arr1).